We begin with the raw amino-acid sequence, 122 residues long: Large ribosomal subunit protein uL14 (122 aa).

Belongs to the universal ribosomal protein uL14 family. In terms of assembly, part of the 50S ribosomal subunit. Forms a cluster with proteins L3 and L19. In the 70S ribosome, L14 and L19 interact and together make contacts with the 16S rRNA in bridges B5 and B8.

In terms of biological role, binds to 23S rRNA. Forms part of two intersubunit bridges in the 70S ribosome. This is Large ribosomal subunit protein uL14 from Shewanella baltica (strain OS223).